The chain runs to 380 residues: Homoserine O-acetyltransferase (380 aa).

Positions 70 to 366 (NAVLVFHALT…SPHGHDAFLI (297 aa)) constitute an AB hydrolase-1 domain. Catalysis depends on Ser-186, which acts as the Nucleophile. Substrate is bound at residue Arg-250. Active-site residues include Asp-333 and His-361. Asp-362 contributes to the substrate binding site.

It belongs to the AB hydrolase superfamily. MetX family. Homodimer.

The protein resides in the cytoplasm. It catalyses the reaction L-homoserine + acetyl-CoA = O-acetyl-L-homoserine + CoA. It participates in amino-acid biosynthesis; L-methionine biosynthesis via de novo pathway; O-acetyl-L-homoserine from L-homoserine: step 1/1. Functionally, transfers an acetyl group from acetyl-CoA to L-homoserine, forming acetyl-L-homoserine. In Thermus thermophilus (strain ATCC 27634 / DSM 579 / HB8), this protein is Homoserine O-acetyltransferase.